The primary structure comprises 134 residues: Large ribosomal subunit protein eL32 (134 aa).

This sequence belongs to the eukaryotic ribosomal protein eL32 family.

The chain is Large ribosomal subunit protein eL32 (RpL32) from Drosophila affinis (Fruit fly).